Consider the following 352-residue polypeptide: UDP-N-acetylglucosamine--N-acetylmuramyl-(pentapeptide) pyrophosphoryl-undecaprenol N-acetylglucosamine transferase (352 aa).

UDP-N-acetyl-alpha-D-glucosamine-binding positions include 14–16 (TGG), asparagine 124, arginine 164, serine 185, and glutamine 285.

The protein belongs to the glycosyltransferase 28 family. MurG subfamily.

The protein resides in the cell inner membrane. The enzyme catalyses di-trans,octa-cis-undecaprenyl diphospho-N-acetyl-alpha-D-muramoyl-L-alanyl-D-glutamyl-meso-2,6-diaminopimeloyl-D-alanyl-D-alanine + UDP-N-acetyl-alpha-D-glucosamine = di-trans,octa-cis-undecaprenyl diphospho-[N-acetyl-alpha-D-glucosaminyl-(1-&gt;4)]-N-acetyl-alpha-D-muramoyl-L-alanyl-D-glutamyl-meso-2,6-diaminopimeloyl-D-alanyl-D-alanine + UDP + H(+). It functions in the pathway cell wall biogenesis; peptidoglycan biosynthesis. Functionally, cell wall formation. Catalyzes the transfer of a GlcNAc subunit on undecaprenyl-pyrophosphoryl-MurNAc-pentapeptide (lipid intermediate I) to form undecaprenyl-pyrophosphoryl-MurNAc-(pentapeptide)GlcNAc (lipid intermediate II). This is UDP-N-acetylglucosamine--N-acetylmuramyl-(pentapeptide) pyrophosphoryl-undecaprenol N-acetylglucosamine transferase from Chlamydia trachomatis serovar L2 (strain ATCC VR-902B / DSM 19102 / 434/Bu).